The following is a 327-amino-acid chain: Small ribosomal subunit protein uS2 (327 aa).

Residues 258 to 327 (AGHTPVSETL…PGVADGAALE (70 aa)) form a disordered region.

This sequence belongs to the universal ribosomal protein uS2 family.

This is Small ribosomal subunit protein uS2 from Anaplasma marginale (strain St. Maries).